A 292-amino-acid polypeptide reads, in one-letter code: Peroxisomal 2,4-dienoyl-CoA reductase [(3E)-enoyl-CoA-producing] (292 aa).

Ala2 is modified (N-acetylalanine). NADP(+) is bound by residues 35 to 40 (GGGSGI), 60 to 64 (RSLQK), and Asp86. Arg60 contacts substrate. Position 64 is an N6-acetyllysine (Lys64). Substrate-binding positions include Arg88, Phe118, and 126-128 (SFN). N6-acetyllysine is present on Lys151. Residues Lys182 and 208 to 214 (PGAISGT) contribute to the NADP(+) site. Residue Arg219 coordinates substrate. Ser287 carries the post-translational modification Phosphoserine. The Microbody targeting signal signature appears at 290 to 292 (AKL). Lys291 is subject to N6-acetyllysine.

This sequence belongs to the short-chain dehydrogenases/reductases (SDR) family. 2,4-dienoyl-CoA reductase subfamily. Monomer, dimer and oligomer.

It localises to the peroxisome. The catalysed reaction is a (2E,4Z)-dienoyl-CoA + NADPH + H(+) = a 4,5-saturated-(3E)-enoyl-CoA + NADP(+). It catalyses the reaction a (2E,4E)-dienoyl-CoA + NADPH + H(+) = a 4,5-saturated-(3E)-enoyl-CoA + NADP(+). The enzyme catalyses (2E,4E)-hexadienoyl-CoA + NADPH + H(+) = (3E)-hexenoyl-CoA + NADP(+). It carries out the reaction (2E,4E)-decadienoyl-CoA + NADPH + H(+) = (3E)-decenoyl-CoA + NADP(+). The catalysed reaction is (2E,4Z,7Z,10Z,13Z,16Z,19Z)-docosaheptaenoyl-CoA + NADPH + H(+) = (3E,7Z,10Z,13Z,16Z,19Z)-docosahexaenoyl-CoA + NADP(+). Functionally, auxiliary enzyme of beta-oxidation. Participates in the degradation of unsaturated fatty enoyl-CoA esters having double bonds in both even- and odd-numbered positions in peroxisome. Catalyzes the NADP-dependent reduction of 2,4-dienoyl-CoA to yield trans-3-enoyl-CoA. Has activity towards short and medium chain 2,4-dienoyl-CoAs, but also towards 2,4,7,10,13,16,19-docosaheptaenoyl-CoA, suggesting that it does not constitute a rate limiting step in the peroxisomal degradation of docosahexaenoic acid. The protein is Peroxisomal 2,4-dienoyl-CoA reductase [(3E)-enoyl-CoA-producing] (Decr2) of Mus musculus (Mouse).